The following is a 718-amino-acid chain: Adhesin-like cell surface protein MAD1 (718 aa).

The N-terminal stretch at 1-19 is a signal peptide; that stretch reads MKGAIQFLGALAAVQAVSA. 9 tandem repeats follow at residues 217–243, 244–265, 266–282, 283–309, 310–336, 337–358, 359–382, 383–402, and 403–420. The interval 452 to 472 is disordered; sequence TSIPYETPSPSETETLPPSGT. The 114-residue stretch at 462-575 folds into the CFEM domain; the sequence is SETETLPPSG…VTLPPVTTGA (114 aa). 3 disulfides stabilise this stretch: C494/C526, C504/C512, and C514/C548. Heme is bound at residue D509. A lipid anchor (GPI-anchor amidated glycine) is attached at G693. Positions 694-718 are cleaved as a propeptide — removed in mature form; that stretch reads AASSFKAFSTVMLAGVIGLTALIMA.

Belongs to the RBT5 family. The GPI-anchor is attached to the protein in the endoplasmic reticulum and serves to target the protein to the cell surface. There, the glucosamine-inositol phospholipid moiety is cleaved off and the GPI-modified mannoprotein is covalently attached via its lipidless GPI glycan remnant to the 1,6-beta-glucan of the outer cell wall layer.

The protein resides in the secreted. It localises to the cell wall. The protein localises to the cell membrane. Its function is as follows. Cell surface adhesion protein that plays a key role in switching between the saprophytic lifestyle and the predacious lifestyle (nematode trapping). Likely functions to prevent energy-consuming trap formation in the absence of nematodes, and keeps the fungus in the saprophytic life style. May influence the induction signal of trap formation by limiting the porosity of the cell wall and thus affecting its permeability of nitrogen source. This is Adhesin-like cell surface protein MAD1 from Arthrobotrys oligospora (strain ATCC 24927 / CBS 115.81 / DSM 1491) (Nematode-trapping fungus).